The chain runs to 803 residues: MDDWKSRLVIENMLPHFNMVGNRQETRKLQESGTSKRRQEGENFHFTGMADGSYPNKIKRPCLEDVTLSMGPGAHPTSLSTEMQMPTLNMNPTSADLGVAGQSLLLENNPLDSNVVNSSAMGSPFGVPSTADTGLKGHAVPYYEKNNSMPAVDQELQDLLEELTKIQEPSSNDLDLEKILGSKPEEPLVLHNPQAPLGPPAKLPVQMPHMESLGSSKEFASSCSQVAGTSLPIMPSSTGMSYSIPSSSKQIVSSSSSTAQAQVKNQVQNMLPVTMPPLSVPQWHHAHQLKALAASKQGSATKQGSNRNWSSLPPPGLSPPYLPVPSPHPPPPQPPPPPFSPQNFTASCMSSSSLSGSAVQSSPNALLSSMAPSSNASLGPTLPYVPAKLPGLPLNQQPQFSPQSSILANLVSSSVKSPQGHLISALPTSTPGPSPPYRPENLSSPGLPQQSFTPQYSLIRSLTPTSNLLSQQQQQQQQQQQQQQQQQQQQQQQQHQANSIFKPMTSSQQPKTLSMIMQQGLSSSSPEAPEPFTFSNTKPLSHFVSEPSPQKMASMSTHSRQSSLLHYLPQATPAHAPSATASSTATATLQLQHHHQQHHHQQHHHQQQHHQQQHHQQHHHQQQQHQQQQHQQQQQQQPDQSSFLLQQIMQQPQRFQRMMASDSMPALPGQGCCHRCAWTSTALWLEHQHQQWNSLTSTHGHVPPSNLTHVDKACKLGEARPPHVSLGRQPPSRQALGSESFLPGSSFAHELARVTSTSSYNTSEAAPWGGWDPKAWRQVPAPLLPSCDAAAREAEIRSYGNDP.

Disordered stretches follow at residues 22-50, 292-374, 420-452, and 486-641; these read NRQE…TGMA, LAAS…APSS, GHLI…QQSF, and QQQQ…PDQS. Residues 296-309 are compositionally biased toward polar residues; that stretch reads KQGSATKQGSNRNW. Over residues 312 to 340 the composition is skewed to pro residues; the sequence is LPPPGLSPPYLPVPSPHPPPPQPPPPPFS. Low complexity predominate over residues 347–362; sequence SCMSSSSLSGSAVQSS. Polar residues-rich tracts occupy residues 363–374, 441–452, 495–526, and 547–564; these read PNALLSSMAPSS, NLSSPGLPQQSF, HQAN…SSSP, and PSPQ…QSSL. Over residues 571-588 the composition is skewed to low complexity; the sequence is ATPAHAPSATASSTATAT. Over residues 592-622 the composition is skewed to basic residues; the sequence is QHHHQQHHHQQHHHQQQHHQQQHHQQHHHQQ. Residues 623-641 are compositionally biased toward low complexity; it reads QQHQQQQHQQQQQQQPDQS.

It belongs to the mastermind family.

The protein localises to the nucleus. Transactivates the HES3 promoter independently of NOTCH proteins. HES3 is a non-canonical NOTCH target gene which lacks binding sites for RBPJ. Required for testosterone production. This chain is Mastermind-like domain-containing protein 1 (Mamld1), found in Mus musculus (Mouse).